Reading from the N-terminus, the 212-residue chain is MKKVILFTYVIIFLVFLSGYSVVTKNIVHNIKNNYKNNVCSMKVMHLWFKIINLFSKKYNVDKKLITAIICVESSGNTHAVSISKAIGLMQIKPFSAGREVYRFRGLLNQPSDVDLYDPKINIDIGTSYINILRNKILSGIKNSEILLYATIISYAHGASKLLKSFSYNKTLAIKKINKMKIKEFLDYIHNKYSEKKAWDYLSKVMYVYHLV.

It belongs to the transglycosylase Slt family.

The enzyme catalyses Exolytic cleavage of the (1-&gt;4)-beta-glycosidic linkage between N-acetylmuramic acid (MurNAc) and N-acetylglucosamine (GlcNAc) residues in peptidoglycan, from either the reducing or the non-reducing ends of the peptidoglycan chains, with concomitant formation of a 1,6-anhydrobond in the MurNAc residue.. Its function is as follows. Murein-degrading enzyme. May play a role in recycling of muropeptides during cell elongation and/or cell division. The polypeptide is Membrane-bound lytic murein transglycosylase E (mltE) (Buchnera aphidicola subsp. Baizongia pistaciae (strain Bp)).